The sequence spans 330 residues: Ferredoxin--NADP reductase (330 aa).

FAD contacts are provided by glutamate 35, glutamine 43, tyrosine 48, valine 90, phenylalanine 123, aspartate 285, and threonine 326.

This sequence belongs to the ferredoxin--NADP reductase type 2 family. Homodimer. FAD is required as a cofactor.

It carries out the reaction 2 reduced [2Fe-2S]-[ferredoxin] + NADP(+) + H(+) = 2 oxidized [2Fe-2S]-[ferredoxin] + NADPH. In Streptococcus pyogenes serotype M28 (strain MGAS6180), this protein is Ferredoxin--NADP reductase.